A 396-amino-acid polypeptide reads, in one-letter code: Enoyl-[acyl-carrier-protein] reductase [NADH] (396 aa).

Residues 48–53 (GASTGY), 74–75 (FE), 111–112 (DA), and 139–140 (LA) contribute to the NAD(+) site. Tyrosine 225 is a substrate binding site. The active-site Proton donor is tyrosine 235. NAD(+) contacts are provided by residues lysine 244 and 273-275 (VVT).

Belongs to the TER reductase family. As to quaternary structure, monomer.

It carries out the reaction a 2,3-saturated acyl-[ACP] + NAD(+) = a (2E)-enoyl-[ACP] + NADH + H(+). The protein operates within lipid metabolism; fatty acid biosynthesis. In terms of biological role, involved in the final reduction of the elongation cycle of fatty acid synthesis (FAS II). Catalyzes the reduction of a carbon-carbon double bond in an enoyl moiety that is covalently linked to an acyl carrier protein (ACP). The sequence is that of Enoyl-[acyl-carrier-protein] reductase [NADH] from Colwellia psychrerythraea (strain 34H / ATCC BAA-681) (Vibrio psychroerythus).